Here is a 418-residue protein sequence, read N- to C-terminus: Serine hydroxymethyltransferase (418 aa).

(6S)-5,6,7,8-tetrahydrofolate is bound by residues Leu121 and 125–127 (GHL). An N6-(pyridoxal phosphate)lysine modification is found at Lys230. (6S)-5,6,7,8-tetrahydrofolate contacts are provided by residues Glu246 and 355 to 357 (SPF).

It belongs to the SHMT family. Homodimer. Pyridoxal 5'-phosphate is required as a cofactor.

Its subcellular location is the cytoplasm. The enzyme catalyses (6R)-5,10-methylene-5,6,7,8-tetrahydrofolate + glycine + H2O = (6S)-5,6,7,8-tetrahydrofolate + L-serine. The protein operates within one-carbon metabolism; tetrahydrofolate interconversion. It participates in amino-acid biosynthesis; glycine biosynthesis; glycine from L-serine: step 1/1. Catalyzes the reversible interconversion of serine and glycine with tetrahydrofolate (THF) serving as the one-carbon carrier. This reaction serves as the major source of one-carbon groups required for the biosynthesis of purines, thymidylate, methionine, and other important biomolecules. Also exhibits THF-independent aldolase activity toward beta-hydroxyamino acids, producing glycine and aldehydes, via a retro-aldol mechanism. This chain is Serine hydroxymethyltransferase, found in Streptococcus pneumoniae (strain Taiwan19F-14).